Here is a 64-residue protein sequence, read N- to C-terminus: Large ribosomal subunit protein bL33c (64 aa).

This sequence belongs to the bacterial ribosomal protein bL33 family.

The protein localises to the plastid. It localises to the chloroplast. In Phaeodactylum tricornutum (strain CCAP 1055/1), this protein is Large ribosomal subunit protein bL33c.